A 443-amino-acid polypeptide reads, in one-letter code: D-inositol 3-phosphate glycosyltransferase (443 aa).

Position 30 (His30) interacts with 1D-myo-inositol 3-phosphate. Residues 36-37 (QP) and Gly44 each bind UDP-N-acetyl-alpha-D-glucosamine. Residues 41-46 (DAGGMN), Lys99, Tyr132, Thr156, and Arg176 contribute to the 1D-myo-inositol 3-phosphate site. Residues Arg250, Lys255, and Arg316 each coordinate UDP-N-acetyl-alpha-D-glucosamine. 3 residues coordinate Mg(2+): Phe325, Arg326, and Cys328. UDP-N-acetyl-alpha-D-glucosamine contacts are provided by Glu338 and Glu346. Position 352 (Thr352) interacts with Mg(2+).

It belongs to the glycosyltransferase group 1 family. MshA subfamily. In terms of assembly, homodimer.

The enzyme catalyses 1D-myo-inositol 3-phosphate + UDP-N-acetyl-alpha-D-glucosamine = 1D-myo-inositol 2-acetamido-2-deoxy-alpha-D-glucopyranoside 3-phosphate + UDP + H(+). Its function is as follows. Catalyzes the transfer of a N-acetyl-glucosamine moiety to 1D-myo-inositol 3-phosphate to produce 1D-myo-inositol 2-acetamido-2-deoxy-glucopyranoside 3-phosphate in the mycothiol biosynthesis pathway. In Stackebrandtia nassauensis (strain DSM 44728 / CIP 108903 / NRRL B-16338 / NBRC 102104 / LLR-40K-21), this protein is D-inositol 3-phosphate glycosyltransferase.